Here is a 388-residue protein sequence, read N- to C-terminus: DNA ADP-ribosyl transferase-DNA ADP-ribosyl glycohydrolase fusion protein (388 aa).

A DarT domain is found at 6 to 197 (RELYYITHID…PVIPDPTFFF (192 aa)). Residues 10–12 (YIT) and arginine 50 contribute to the NAD(+) site. Positions 34–52 (QSINCKKVYDNSIVLKRKS) are NAD(+)-binding element. Catalysis depends on arginine 50, which acts as the Proton acceptor. The tract at residues 107–152 (TDGNAASSETQIYRKSEIKNIKNIISVKDMEYWREEDGSKRKIMAE) is ADP-ribosylating turn-turn loop. Residue glutamate 152 is part of the active site. In terms of domain architecture, Macro spans 196–376 (FFLPNREIKL…IYLPLEKRIP (181 aa)). ADP-D-ribose is bound by residues 215–216 (DM), 227–229 (SVN), threonine 301, 339–343 (GCGLG), and 371–372 (LE).

The protein in the N-terminal section; belongs to the DarT ADP-ribosyltransferase family. This sequence in the C-terminal section; belongs to the DarG ADP-ribosyl glycohydrolase family.

The catalysed reaction is an N-(ADP-alpha-D-ribosyl)-thymidine in DNA + H2O = a thymidine in DNA + ADP-D-ribose. The enzyme catalyses a thymidine in DNA + NAD(+) = an N-(ADP-alpha-D-ribosyl)-thymidine in DNA + nicotinamide + H(+). In terms of biological role, a fusion protein of the toxic and antitoxin components of a hybrid type II/IV toxin-antitoxin (TA) system. The N-terminal domain ADP-ribosylates ssDNA on a thymidine residue, while the C-terminal domain removes the modification, neutralizing the toxic effect. This chain is DNA ADP-ribosyl transferase-DNA ADP-ribosyl glycohydrolase fusion protein, found in Thermosipho africanus (strain H17ap60334).